A 297-amino-acid polypeptide reads, in one-letter code: Homoserine kinase (297 aa).

Pro-82 to Ala-92 lines the ATP pocket.

This sequence belongs to the GHMP kinase family. Homoserine kinase subfamily.

It localises to the cytoplasm. The enzyme catalyses L-homoserine + ATP = O-phospho-L-homoserine + ADP + H(+). Its pathway is amino-acid biosynthesis; L-threonine biosynthesis; L-threonine from L-aspartate: step 4/5. Catalyzes the ATP-dependent phosphorylation of L-homoserine to L-homoserine phosphate. In Clostridium botulinum (strain Kyoto / Type A2), this protein is Homoserine kinase.